The following is a 433-amino-acid chain: Enolase (433 aa).

Q163 is a (2R)-2-phosphoglycerate binding site. E205 functions as the Proton donor in the catalytic mechanism. Mg(2+)-binding residues include D242, E291, and D318. (2R)-2-phosphoglycerate contacts are provided by K343, R372, S373, and K394. K343 serves as the catalytic Proton acceptor.

This sequence belongs to the enolase family. It depends on Mg(2+) as a cofactor.

It localises to the cytoplasm. It is found in the secreted. Its subcellular location is the cell surface. It catalyses the reaction (2R)-2-phosphoglycerate = phosphoenolpyruvate + H2O. It functions in the pathway carbohydrate degradation; glycolysis; pyruvate from D-glyceraldehyde 3-phosphate: step 4/5. Functionally, catalyzes the reversible conversion of 2-phosphoglycerate (2-PG) into phosphoenolpyruvate (PEP). It is essential for the degradation of carbohydrates via glycolysis. The sequence is that of Enolase from Methylibium petroleiphilum (strain ATCC BAA-1232 / LMG 22953 / PM1).